Here is a 262-residue protein sequence, read N- to C-terminus: Indole-3-glycerol phosphate synthase (262 aa).

The protein belongs to the TrpC family.

The catalysed reaction is 1-(2-carboxyphenylamino)-1-deoxy-D-ribulose 5-phosphate + H(+) = (1S,2R)-1-C-(indol-3-yl)glycerol 3-phosphate + CO2 + H2O. The protein operates within amino-acid biosynthesis; L-tryptophan biosynthesis; L-tryptophan from chorismate: step 4/5. This chain is Indole-3-glycerol phosphate synthase, found in Staphylococcus epidermidis (strain ATCC 35984 / DSM 28319 / BCRC 17069 / CCUG 31568 / BM 3577 / RP62A).